Here is a 105-residue protein sequence, read N- to C-terminus: Protein yippee-like At4g27740 (105 aa).

The 98-residue stretch at 8 to 105 (PTYFCRNCEN…IEKLKLTKRY (98 aa)) folds into the Yippee domain. Cys-12, Cys-15, Cys-68, and Cys-71 together coordinate Zn(2+).

Belongs to the yippee family.

This chain is Protein yippee-like At4g27740, found in Arabidopsis thaliana (Mouse-ear cress).